We begin with the raw amino-acid sequence, 676 residues long: UvrABC system protein C (676 aa).

Residues 16–95 (VEPGVYRFRD…IKEFDPRFNI (80 aa)) enclose the GIY-YIG domain. The region spanning 208 to 243 (DRLVRDLERKMTAAAEDLDFERAARLRDDIGALRRA) is the UVR domain.

The protein belongs to the UvrC family. As to quaternary structure, interacts with UvrB in an incision complex.

It is found in the cytoplasm. Its function is as follows. The UvrABC repair system catalyzes the recognition and processing of DNA lesions. UvrC both incises the 5' and 3' sides of the lesion. The N-terminal half is responsible for the 3' incision and the C-terminal half is responsible for the 5' incision. This is UvrABC system protein C from Mycobacterium sp. (strain KMS).